The chain runs to 339 residues: 2-oxoisovalerate dehydrogenase subunit beta (339 aa).

As to quaternary structure, heterodimer of an alpha and a beta chain. Thiamine diphosphate is required as a cofactor.

The enzyme catalyses N(6)-[(R)-lipoyl]-L-lysyl-[protein] + 3-methyl-2-oxobutanoate + H(+) = N(6)-[(R)-S(8)-2-methylpropanoyldihydrolipoyl]-L-lysyl-[protein] + CO2. Its function is as follows. The branched-chain alpha-keto dehydrogenase complex catalyzes the overall conversion of alpha-keto acids to acyl-CoA and CO(2). It contains multiple copies of three enzymatic components: branched-chain alpha-keto acid decarboxylase (E1), lipoamide acyltransferase (E2) and lipoamide dehydrogenase (E3). The polypeptide is 2-oxoisovalerate dehydrogenase subunit beta (bkdA2) (Pseudomonas putida (Arthrobacter siderocapsulatus)).